We begin with the raw amino-acid sequence, 545 residues long: Probable protein kinase UbiB (545 aa).

Residues 123–501 (DFEPIALASA…QIKQRQSQYL (379 aa)) form the Protein kinase domain. ATP-binding positions include 129–137 (LASASIAQV) and lysine 152. Residue aspartate 287 is the Proton acceptor of the active site. Residues 508-528 (LFLCGSLFLLSGLANIPWLFI) traverse the membrane as a helical segment.

The protein belongs to the ABC1 family. UbiB subfamily.

It localises to the cell inner membrane. It participates in cofactor biosynthesis; ubiquinone biosynthesis [regulation]. Its function is as follows. Is probably a protein kinase regulator of UbiI activity which is involved in aerobic coenzyme Q (ubiquinone) biosynthesis. The sequence is that of Probable protein kinase UbiB from Photorhabdus laumondii subsp. laumondii (strain DSM 15139 / CIP 105565 / TT01) (Photorhabdus luminescens subsp. laumondii).